Consider the following 557-residue polypeptide: Ribonuclease J 2 (557 aa).

Residues His-76, His-78, His-144, and Glu-166 each coordinate Zn(2+). Residue 366 to 370 coordinates substrate; that stretch reads HASSH.

The protein belongs to the metallo-beta-lactamase superfamily. RNA-metabolizing metallo-beta-lactamase-like family. Bacterial RNase J subfamily. Homodimer, may be a subunit of the RNA degradosome. Zn(2+) is required as a cofactor.

The protein resides in the cytoplasm. Functionally, an RNase that has 5'-3' exonuclease and possibly endoonuclease activity. Involved in maturation of rRNA and in some organisms also mRNA maturation and/or decay. This chain is Ribonuclease J 2, found in Staphylococcus epidermidis (strain ATCC 35984 / DSM 28319 / BCRC 17069 / CCUG 31568 / BM 3577 / RP62A).